We begin with the raw amino-acid sequence, 683 residues long: UvrABC system protein B (683 aa).

The Helicase ATP-binding domain occupies 31 to 414 (AGFEKGYKEQ…ELERTDHKVE (384 aa)). 44–51 (GATGTGKT) is a binding site for ATP. Positions 97-120 (YYDYYQPEAYVPQSDTYIEKDSAI) match the Beta-hairpin motif. Residues 435-601 (QIDDLVGEIN…TIIKPVHDVI (167 aa)) form the Helicase C-terminal domain. Residues 632–667 (KTMIKNLQEQMKEAAKKLDFEEAANLRDAIMELQSS) enclose the UVR domain. A disordered region spans residues 662–683 (MELQSSSRRPKTRKGKALNGKR). Basic residues predominate over residues 669–683 (RRPKTRKGKALNGKR).

The protein belongs to the UvrB family. In terms of assembly, forms a heterotetramer with UvrA during the search for lesions. Interacts with UvrC in an incision complex.

It localises to the cytoplasm. Its function is as follows. The UvrABC repair system catalyzes the recognition and processing of DNA lesions. A damage recognition complex composed of 2 UvrA and 2 UvrB subunits scans DNA for abnormalities. Upon binding of the UvrA(2)B(2) complex to a putative damaged site, the DNA wraps around one UvrB monomer. DNA wrap is dependent on ATP binding by UvrB and probably causes local melting of the DNA helix, facilitating insertion of UvrB beta-hairpin between the DNA strands. Then UvrB probes one DNA strand for the presence of a lesion. If a lesion is found the UvrA subunits dissociate and the UvrB-DNA preincision complex is formed. This complex is subsequently bound by UvrC and the second UvrB is released. If no lesion is found, the DNA wraps around the other UvrB subunit that will check the other stand for damage. The chain is UvrABC system protein B from Lactobacillus acidophilus (strain ATCC 700396 / NCK56 / N2 / NCFM).